The chain runs to 344 residues: DNA-directed RNA polymerase subunit alpha (344 aa).

Residues 1-238 (MKVIKTAPLI…KQLGVFGERP (238 aa)) form an alpha N-terminal domain (alpha-NTD) region. Residues 254 to 344 (AKDLSAKIES…EKLEDKGGND (91 aa)) are alpha C-terminal domain (alpha-CTD).

This sequence belongs to the RNA polymerase alpha chain family. As to quaternary structure, homodimer. The RNAP catalytic core consists of 2 alpha, 1 beta, 1 beta' and 1 omega subunit. When a sigma factor is associated with the core the holoenzyme is formed, which can initiate transcription.

It carries out the reaction RNA(n) + a ribonucleoside 5'-triphosphate = RNA(n+1) + diphosphate. Functionally, DNA-dependent RNA polymerase catalyzes the transcription of DNA into RNA using the four ribonucleoside triphosphates as substrates. This chain is DNA-directed RNA polymerase subunit alpha, found in Helicobacter pylori (strain ATCC 700392 / 26695) (Campylobacter pylori).